We begin with the raw amino-acid sequence, 273 residues long: HTH-type transcriptional activator RhaS (273 aa).

Positions 174–272 (YQLLDWLQNN…SQSPRDLRSQ (99 aa)) constitute an HTH araC/xylS-type domain. DNA-binding regions (H-T-H motif) lie at residues 191 to 212 (PELADRFALPLRTLHRQLKNKT) and 239 to 262 (VTDIAYLCGFGDSNHFSTLFKREF).

As to quaternary structure, binds DNA as a dimer.

Its subcellular location is the cytoplasm. Its function is as follows. Activates expression of the rhaBAD and rhaT operons. The protein is HTH-type transcriptional activator RhaS of Yersinia pseudotuberculosis serotype I (strain IP32953).